A 121-amino-acid chain; its full sequence is Basic phospholipase A2 BbTX-III (121 aa).

Y27, G29, and G31 together coordinate Ca(2+). Disulfide bonds link C28–C44, C43–C95, C49–C121, C50–C88, C58–C82, and C76–C86. H47 is a catalytic residue. A Ca(2+)-binding site is contributed by D48. Residue D89 is part of the active site.

This sequence belongs to the phospholipase A2 family. Group II subfamily. D49 sub-subfamily. Homodimer; non-covalently linked. It depends on Ca(2+) as a cofactor. Expressed by the venom gland.

It is found in the secreted. The catalysed reaction is a 1,2-diacyl-sn-glycero-3-phosphocholine + H2O = a 1-acyl-sn-glycero-3-phosphocholine + a fatty acid + H(+). In terms of biological role, snake venom phospholipase A2 (PLA2) that exhibits myotoxin and anticoagulant activity. Displays edema-inducing activities in mouse paw. Also displays cytotoxic activity against some cell lines and myotubes, and antimicrobial activities against E.coli, C.albicans and Leishmania. PLA2 catalyzes the calcium-dependent hydrolysis of the 2-acyl groups in 3-sn-phosphoglycerides. The sequence is that of Basic phospholipase A2 BbTX-III from Bothrops brazili (Brazil's lancehead).